The chain runs to 704 residues: Boron transporter 1 (704 aa).

Residues 1–35 (MEETFVPFEGIKNDLKGRLMCYKQDWTGGFKAGFR) are Cytoplasmic-facing. The helical transmembrane segment at 36 to 56 (ILAPTTYIFFASAIPVISFGE) threads the bilayer. Over 57-75 (QLERSTDGVLTAVQTLAST) the chain is Extracellular. A helical membrane pass occupies residues 76 to 96 (AICGMIHSIIGGQPLLILGVA). Over 97–120 (EPTVIMYTFMFNFAKARPELGRDL) the chain is Cytoplasmic. A helical transmembrane segment spans residues 121–141 (FLAWSGWVCVWTALMLFVLAI). Topologically, residues 142-155 (CGACSIINRFTRVA) are extracellular. Residues 156–176 (GELFGLLIAMLFMQQAIKGLV) form a helical membrane-spanning segment. Over 177 to 195 (DEFRIPERENQKLKEFLPS) the chain is Cytoplasmic. A helical membrane pass occupies residues 196-216 (WRFANGMFALVLSFGLLLTGL). The Extracellular segment spans residues 217-233 (RSRKARSWRYGTGWLRS). Residues 234-254 (LIADYGVPLMVLVWTGVSYIP) traverse the membrane as a helical segment. The Cytoplasmic portion of the chain corresponds to 255 to 289 (AGDVPKGIPRRLFSPNPWSPGAYGNWTVVKEMLDV). Residues 290–310 (PIVYIIGAFIPASMIAVLYYF) traverse the membrane as a helical segment. Residues 311-337 (DHSVASQLAQQKEFNLRKPSSYHYDLL) are Extracellular-facing. A helical transmembrane segment spans residues 338–358 (LLGFLTLMCGLLGVPPSNGVI). Over 359–480 (PQSPMHTKSL…STMVGGCVAA (122 aa)) the chain is Cytoplasmic. Residues 481 to 501 (MPILKMIPTSVLWGYFAFMAI) traverse the membrane as a helical segment. At 502–557 (ESLPGNQFWERILLLFTAPSRRFKVLEDYHATFVETVPFKTIAMFTLFQTTYLLIC) the chain is on the extracellular side. A helical membrane pass occupies residues 558 to 578 (FGLTWIPIAGVMFPLMIMFLI). Residues 579–704 (PVRQYLLPRF…RSPLNQSSSN (126 aa)) are Cytoplasmic-facing. Residues 641–704 (EFRHTSSPKV…RSPLNQSSSN (64 aa)) form a disordered region. The span at 647–664 (SPKVTSSSSTPVNNRSLS) shows a compositional bias: low complexity.

The protein belongs to the anion exchanger (TC 2.A.31.3) family. As to expression, expressed in proximal side of various root cells, notably in the columella, lateral root cap, epidermis and endodermis in tip and elongation zones of the root. Also detected in the epidermis, cortex, endodermis, and stele cells of the root hair zone. Observed in cotyledons and hypocotyls.

It is found in the cell membrane. Its subcellular location is the endosome membrane. The protein resides in the vacuole membrane. In terms of biological role, efflux-type boron (B) transporter for xylem loading, responsive of boron translocation from roots to shoots under boron limitation. Boron is essential for maintaining the integrity of plants cell walls. This chain is Boron transporter 1, found in Arabidopsis thaliana (Mouse-ear cress).